We begin with the raw amino-acid sequence, 306 residues long: uncharacterized protein (306 aa).

A run of 10 helical transmembrane segments spans residues leucine 6–leucine 26, alanine 35–alanine 55, tyrosine 69–serine 89, valine 98–phenylalanine 118, leucine 122–asparagine 142, tyrosine 154–alanine 174, glutamine 186–serine 206, leucine 211–glycine 231, valine 247–serine 267, and tyrosine 281–leucine 301. 2 consecutive EamA domains span residues methionine 17–asparagine 142 and leucine 166–isoleucine 296.

This sequence belongs to the EamA transporter family.

Its subcellular location is the cell membrane. This is an uncharacterized protein from Haemophilus influenzae (strain ATCC 51907 / DSM 11121 / KW20 / Rd).